Consider the following 156-residue polypeptide: Small ribosomal subunit protein uS7 (156 aa).

This sequence belongs to the universal ribosomal protein uS7 family. As to quaternary structure, part of the 30S ribosomal subunit. Contacts proteins S9 and S11.

In terms of biological role, one of the primary rRNA binding proteins, it binds directly to 16S rRNA where it nucleates assembly of the head domain of the 30S subunit. Is located at the subunit interface close to the decoding center, probably blocks exit of the E-site tRNA. This chain is Small ribosomal subunit protein uS7, found in Staphylococcus aureus (strain bovine RF122 / ET3-1).